The following is a 154-amino-acid chain: IQ domain-containing protein F3 (154 aa).

Residues 89–118 form the IQ domain; that stretch reads QEQATVKLQSCIRMWQCRQCYRQMCNALCL.

The chain is IQ domain-containing protein F3 (IQCF3) from Homo sapiens (Human).